Reading from the N-terminus, the 156-residue chain is Phosphopantetheine adenylyltransferase (156 aa).

Thr-10 contacts substrate. ATP-binding positions include 10–11 (TF) and His-18. Residues Lys-42, Leu-74, and Arg-88 each contribute to the substrate site. Residues 89-91 (GLR), Glu-99, and 124-130 (NAFISSS) contribute to the ATP site.

The protein belongs to the bacterial CoaD family. In terms of assembly, homohexamer. Requires Mg(2+) as cofactor.

The protein localises to the cytoplasm. It carries out the reaction (R)-4'-phosphopantetheine + ATP + H(+) = 3'-dephospho-CoA + diphosphate. It functions in the pathway cofactor biosynthesis; coenzyme A biosynthesis; CoA from (R)-pantothenate: step 4/5. In terms of biological role, reversibly transfers an adenylyl group from ATP to 4'-phosphopantetheine, yielding dephospho-CoA (dPCoA) and pyrophosphate. This is Phosphopantetheine adenylyltransferase from Campylobacter curvus (strain 525.92).